We begin with the raw amino-acid sequence, 798 residues long: Nuclear intron maturase 4, mitochondrial (798 aa).

The transit peptide at 1-16 directs the protein to the mitochondrion; that stretch reads MFRKRNLVLDLLRRCY. The segment at 578 to 665 is intron maturase type-2; that stretch reads VVAPTNAIGR…AAKYRIHENE (88 aa). The segment at 729 to 778 adopts a THAP-type zinc-finger fold; that stretch reads CFVIGCSMAAPAVYTLHAMERQKFPGWKTGFSVCIPSSLNGRRIGLCKQH.

The protein belongs to the plant nuclear intron maturase (nMat) family.

It localises to the mitochondrion. The protein localises to the plastid. It is found in the chloroplast. Nuclear-encoded maturase required for splicing of group-II introns in mitochondria. Involved in NAD1 pre-mRNA processing and maturation of introns 1, 3 and 4. Necessary for mitochondrial biogenesis during early developmental stages. Essential for respiratory holocomplex I biogenesis in mitochondria. The chain is Nuclear intron maturase 4, mitochondrial from Arabidopsis thaliana (Mouse-ear cress).